Consider the following 345-residue polypeptide: UDP-N-acetylenolpyruvoylglucosamine reductase (345 aa).

Residues 59-254 form the FAD-binding PCMH-type domain; the sequence is VGGPAACLAR…RKATQPLGRP (196 aa). Arginine 209 is a catalytic residue. Catalysis depends on cysteine 258, which acts as the Proton donor. Residue glutamate 328 is part of the active site.

This sequence belongs to the MurB family. The cofactor is FAD.

The protein localises to the cytoplasm. It carries out the reaction UDP-N-acetyl-alpha-D-muramate + NADP(+) = UDP-N-acetyl-3-O-(1-carboxyvinyl)-alpha-D-glucosamine + NADPH + H(+). Its pathway is cell wall biogenesis; peptidoglycan biosynthesis. In terms of biological role, cell wall formation. In Syntrophobacter fumaroxidans (strain DSM 10017 / MPOB), this protein is UDP-N-acetylenolpyruvoylglucosamine reductase.